The primary structure comprises 193 residues: 5'RNA triphosphatase A449R (193 aa).

Requires Mn(2+) as cofactor.

It carries out the reaction a 5'-end triphospho-ribonucleoside in mRNA + H2O = a 5'-end diphospho-ribonucleoside in mRNA + phosphate + H(+). Its function is as follows. Catalyzes the first stes of cap formation: by removing the gamma-phosphate from the 5'-triphosphate end of nascent mRNA to yield a diphosphate end. The polypeptide is 5'RNA triphosphatase A449R (A449R) (Chlorella (PBCV-1)).